A 220-amino-acid chain; its full sequence is MPIKSSDHSLYALFGGTFDPIHYGHLKPVEALAQQVGLQHIILLPNHVPPHRPQPEANAQQRLKMVELAVAGNPLFSVDSRELLRDSPSFTIETLEALRKERGAEQPLAFIIGQDSLLSLHKWHRWQALLDVCHLLVCARPGYSQSLETPELQQWLESHKVMDPQALSQRPHGAIYLADTPLLDISATDIRRRRHNGESCDDLLPQAVQRYIELQGLYRG.

It belongs to the NadD family.

The catalysed reaction is nicotinate beta-D-ribonucleotide + ATP + H(+) = deamido-NAD(+) + diphosphate. The protein operates within cofactor biosynthesis; NAD(+) biosynthesis; deamido-NAD(+) from nicotinate D-ribonucleotide: step 1/1. Catalyzes the reversible adenylation of nicotinate mononucleotide (NaMN) to nicotinic acid adenine dinucleotide (NaAD). The chain is Probable nicotinate-nucleotide adenylyltransferase from Yersinia pseudotuberculosis serotype O:1b (strain IP 31758).